The primary structure comprises 747 residues: Endoglucanase D (747 aa).

The first 39 residues, 1-39 (MHSASRTRARTRVRTAVSGLLAATVLAAPLTLVAAPAQA), serve as a signal peptide directing secretion. The active-site Proton donor is the glutamate 208. Glutamate 349 serves as the catalytic Nucleophile. The segment at 456 to 475 (APTGLRAGTPTASTVPLTWS) is disordered. Fibronectin type-III domains lie at 456–543 (APTG…TAAG) and 552–639 (VPTG…TAPD). Positions 465–475 (PTASTVPLTWS) are enriched in polar residues. One can recognise a CBM2 domain in the interval 638–747 (PDPTTGSCAV…TVGGATCTTR (110 aa)).

Belongs to the glycosyl hydrolase 5 (cellulase A) family.

It carries out the reaction Endohydrolysis of (1-&gt;4)-beta-D-glucosidic linkages in cellulose, lichenin and cereal beta-D-glucans.. It participates in glycan metabolism; cellulose degradation. In Cellulomonas fimi, this protein is Endoglucanase D (cenD).